The chain runs to 2824 residues: Highly reducing polyketide synthase stpks1 (2824 aa).

Residues 8-428 form the Ketosynthase family 3 (KS3) domain; that stretch reads PKPVAVVGIS…GANGHVIAES (421 aa). Residues Cys-177, His-312, and His-348 each act as for beta-ketoacyl synthase activity in the active site. The segment at 517 to 854 is malonyl-CoA:ACP transacylase (MAT) domain; the sequence is QLVFVFSGQG…LTAVGNLSTL (338 aa). Ser-616 (for malonyltransferase activity) is an active-site residue. Residues 886-1004 are N-terminal hotdog fold; sequence MPFYSESSEL…GFMTTEVMDK (119 aa). The region spanning 886 to 1168 is the PKS/mFAS DH domain; sequence MPFYSESSEL…SKHWTGAVPT (283 aa). The tract at residues 894 to 1083 is dehydratase (DH) domain; it reads ELAVKMKRSR…PSLLDSCIHG (190 aa). Residue His-925 is the Proton acceptor; for dehydratase activity of the active site. Residues 1018–1168 form a C-terminal hotdog fold region; that stretch reads TTPADISNLY…SKHWTGAVPT (151 aa). Residue Asp-1078 is the Proton donor; for dehydratase activity of the active site. Residues 1101 to 1449 form a methyltransferase (CMet) domain region; sequence PSHIGRVTLY…KFQVVDGAQD (349 aa). Residues 1213-1232 are disordered; the sequence is APPSANGHANGHANGSANGS. Positions 1518–1840 are enoyl reductase (ER) domain; sequence TGTFDGAVAT…LPSDFSVSQS (323 aa). Residues 1842–2096 form a ketoreductase (KR) domain region; sequence ALADDKTYLV…SESVLYNHLV (255 aa). The 88-residue stretch at 2109–2196 folds into the Carrier domain; it reads DPYEVLQEIV…TAVSTAEKPF (88 aa). Positions 2200-2414 are thioesterase (TE) domain; sequence AMHQPGQTIL…WASSDATTRM (215 aa). The interval 2608 to 2809 is methyltransferase (CMet) domain; the sequence is YRQNKVFTSM…ATGYSNVQVC (202 aa).

The protein operates within mycotoxin biosynthesis. Its function is as follows. Highly reducing polyketide synthase; part of the gene cluster that mediates the biosynthesis of strobilurin A, an antifungal polyketide that contains a key beta-methoxyacrylate toxophore that targets the complex III of the mitochondrial electron transport chain. Strobilurin biosynthesis begins with construction of benzoyl CoA by step-wise elimination of ammonia from phenylalanine by the phenylalanine ammonia-lyase str11, oxygenation by str8 and retro-Claisen reaction to form benzoic acid, which is activated to its CoA thiolester benzoyl CoA by the dedicated CoA ligase str10. Benzoyl CoA forms the starter unit for the highly reducing polyketide synthase stpks1 that produces the polyketide prestrobilutin A. The FAD-dependent oxygenase str9 then catalyzes the key oxidative rearrangement responsible for the creation of the beta-methoxyacrylate toxophore. Str9 performs epoxidation of the 2,3 olefin of prestrobilutin A, followed by Meinwald rearrangement to furnish the aldehyde intermediate. Rapid enolization of the aldehyde intermediate would give the beta-methoxyacrylate skeleton and methylations catalyzed by str2 and str3 complete the synthesis and lead to the production of strobilurin A. The short-chain dehydrogenase stl2 and the dehydrogenase str4 play a role in the shunt pathway leading to the production of bolineol. The cluster encodes no obvious halogenase gene that could be involved in production of strobilurin B, nor any obvious dimethylallyl-transferase that could be involved in the production of strobilurin G. It is possible that unknown proteins encoded in, or near, the cluster (such as str1 or stl1) may form new classes of halogenases or dimethylally-transferases, or that the responsible genes are located elsewhere on the genome. Similarly, proteins encoded by str5/str6 hydrolases appear to have no chemical role in the biosynthesis of strobilurin A. Finally, no obvious self-resistance gene is found within the cluster. This Strobilurus tenacellus protein is Highly reducing polyketide synthase stpks1.